The chain runs to 456 residues: Cysteine--tRNA ligase (456 aa).

Position 29 (Cys29) interacts with Zn(2+). Residues 31–41 (PTVYDYAHVGN) carry the 'HIGH' region motif. 3 residues coordinate Zn(2+): Cys209, His234, and Glu238. The 'KMSKS' region motif lies at 267–271 (KMSKS). Lys270 serves as a coordination point for ATP.

It belongs to the class-I aminoacyl-tRNA synthetase family. In terms of assembly, monomer. It depends on Zn(2+) as a cofactor.

The protein resides in the cytoplasm. The enzyme catalyses tRNA(Cys) + L-cysteine + ATP = L-cysteinyl-tRNA(Cys) + AMP + diphosphate. The protein is Cysteine--tRNA ligase of Rhodospirillum centenum (strain ATCC 51521 / SW).